A 183-amino-acid chain; its full sequence is DELTA-miturgitoxin-Cp1c (183 aa).

An N-terminal signal peptide occupies residues 1-20 (MKFSLFFSVFFLAVLHACLS). A propeptide spanning residues 21–47 (ESEIDLEDEEHFMSSDSFLSEIQDESR) is cleaved from the precursor. Positions 44-47 (DESR) match the Processing quadruplet motif motif. Cystine bridges form between Cys51-Cys66, Cys58-Cys75, Cys65-Cys88, Cys77-Cys86, Cys115-Cys130, Cys122-Cys139, Cys129-Cys157, and Cys141-Cys155. Residues 164–177 (QAIEGALRIAKKLI) form a predicted alpha-helix region. Trp181 carries the tryptophan amide modification.

The protein belongs to the neurotoxin 19 (CSTX) family. Double-CSTX subfamily. Post-translationally, cleavage of the propeptide depends on the processing quadruplet motif (XXXR, with at least one of X being E). Expressed by the venom gland.

It is found in the secreted. The protein resides in the target cell membrane. In terms of biological role, spider venom toxin that exhibits cytolytic activity by forming an alpha-helix across the membrane. Lethal to insect larvae. Causes instant paralysis and death in the larvae of the flesh fly (S.carnaria) at doses of 20 ug/g, at doses of less than 10 ug/g causes reversible paralysis. Has cytolytic activity against insect Sf9 cells. Causes stable and irreversible depolarization of fly muscle fibers, leading to contracture at higher toxin concentrations. Destabilizes membranes. The protein is DELTA-miturgitoxin-Cp1c of Cheiracanthium punctorium (Yellow sac spider).